The sequence spans 270 residues: 25S rRNA adenine-N(1) methyltransferase (270 aa).

The S-adenosyl-L-methionine site is built by G111 and D131.

Belongs to the BMT2 family.

The protein localises to the nucleus. It is found in the nucleolus. Its function is as follows. S-adenosyl-L-methionine-dependent methyltransferase that specifically methylates the N(1) position of an adenine present in helix 65 in 25S rRNA. This is 25S rRNA adenine-N(1) methyltransferase from Schizosaccharomyces pombe (strain 972 / ATCC 24843) (Fission yeast).